The sequence spans 144 residues: Large ribosomal subunit protein uL15 (144 aa).

The segment at 1–52 (MRLNTLSPAAGSKPSKKRVGRGIGSGLGKTGGRGHKGQKSRSGGKVRAGFEG) is disordered. Gly residues predominate over residues 21 to 31 (RGIGSGLGKTG). Basic residues predominate over residues 32-44 (GRGHKGQKSRSGG).

It belongs to the universal ribosomal protein uL15 family. Part of the 50S ribosomal subunit.

Functionally, binds to the 23S rRNA. The protein is Large ribosomal subunit protein uL15 of Aliivibrio fischeri (strain ATCC 700601 / ES114) (Vibrio fischeri).